The following is a 335-amino-acid chain: Dihydroorotate dehydrogenase (quinone) (335 aa).

Residues 58-62 and Thr82 contribute to the FMN site; that span reads AGADK. Substrate is bound at residue Lys62. 107-111 serves as a coordination point for substrate; sequence NRNGF. FMN-binding residues include Asn135 and Asn168. Asn168 lines the substrate pocket. Ser171 serves as the catalytic Nucleophile. A substrate-binding site is contributed by Asn173. Lys213 and Gly241 together coordinate FMN. Substrate is bound at residue 242 to 243; it reads NT. FMN contacts are provided by residues Gly264, Gly293, and 314–315; that span reads YS.

The protein belongs to the dihydroorotate dehydrogenase family. Type 2 subfamily. In terms of assembly, monomer. It depends on FMN as a cofactor.

The protein localises to the cell membrane. The enzyme catalyses (S)-dihydroorotate + a quinone = orotate + a quinol. The protein operates within pyrimidine metabolism; UMP biosynthesis via de novo pathway; orotate from (S)-dihydroorotate (quinone route): step 1/1. Catalyzes the conversion of dihydroorotate to orotate with quinone as electron acceptor. This chain is Dihydroorotate dehydrogenase (quinone), found in Actinobacillus pleuropneumoniae serotype 3 (strain JL03).